Here is a 237-residue protein sequence, read N- to C-terminus: Platelet-aggregating proteinase PA-BJ (237 aa).

A propeptide spanning residues Asn-1–Ile-5 is cleaved from the precursor. The 224-residue stretch at Val-6–Ala-229 folds into the Peptidase S1 domain. 6 disulfide bridges follow: Cys-12-Cys-144, Cys-31-Cys-47, Cys-79-Cys-236, Cys-123-Cys-191, Cys-155-Cys-170, and Cys-181-Cys-205. N-linked (GlcNAc...) asparagine glycosylation is present at Asn-25. Ser-28 is a glycosylation site (O-linked (GalNAc...) serine). Active-site charge relay system residues include His-46 and Asp-91. The Charge relay system role is filled by Ser-185.

This sequence belongs to the peptidase S1 family. Snake venom subfamily. As to quaternary structure, monomer. In terms of tissue distribution, expressed by the venom gland.

Its subcellular location is the secreted. Inhibited by PMSF. The amidolytic activity is also inhibited by benzamidine derivatives. Functionally, snake venom serine protease that induces platelet aggregation through activation of protease-activated platelet receptors (PAR1/F2R and PAR4/F2RL3). On F2R, the cleavage occurs at Arg41-Ser42 (like thrombin cleavage), and Arg46-Asn47. In normal condition of hemostasis, the cleavage of the Arg41-Ser42 bond liberates a new N-terminus that functions as an agonist. However after envenomation, the cleavage of Arg46-Asn47 bond degrades this potential agonist. This may explain why the snake protease is less potent than thrombin in causing platelet aggregation and release reaction. On F2RL3, a thrombin-like activity has also been proven by calcium release from lung fibroblasts transfected with this receptor. Possesses amidolytic activities. This Bothrops jararaca (Jararaca) protein is Platelet-aggregating proteinase PA-BJ.